Reading from the N-terminus, the 215-residue chain is MAAAIVAVRINNSNSDEERERRHYQSRKIMDQTDDEVRIASQINNQYAPTKTGMGYMWYKLNCKYGVCIPNFKVIHAGYKLNQIYQSLEETVRFYIGRKQNIDLLIYQIKGIDPSLASYNIVTSSSNPCVFLKIRPKCDNLFWMKGNDSFIKIIYQKINFMAMYQEYRKQLIYLTKQDLTRLYIETFNKKSPKIFSMSRMRSRLLNYKLNKLLTE.

This is an uncharacterized protein from Acanthamoeba polyphaga (Amoeba).